The chain runs to 247 residues: 3-deoxy-manno-octulosonate cytidylyltransferase (247 aa).

It belongs to the KdsB family.

The protein resides in the cytoplasm. It catalyses the reaction 3-deoxy-alpha-D-manno-oct-2-ulosonate + CTP = CMP-3-deoxy-beta-D-manno-octulosonate + diphosphate. It participates in nucleotide-sugar biosynthesis; CMP-3-deoxy-D-manno-octulosonate biosynthesis; CMP-3-deoxy-D-manno-octulosonate from 3-deoxy-D-manno-octulosonate and CTP: step 1/1. It functions in the pathway bacterial outer membrane biogenesis; lipopolysaccharide biosynthesis. Activates KDO (a required 8-carbon sugar) for incorporation into bacterial lipopolysaccharide in Gram-negative bacteria. In Methylorubrum populi (strain ATCC BAA-705 / NCIMB 13946 / BJ001) (Methylobacterium populi), this protein is 3-deoxy-manno-octulosonate cytidylyltransferase.